Consider the following 160-residue polypeptide: Cytochrome b6-f complex subunit 4 (160 aa).

3 helical membrane passes run 36-56 (LLYI…GLAV), 95-115 (LLGI…PFIE), and 131-151 (TVFL…ALPI).

The protein belongs to the cytochrome b family. PetD subfamily. The 4 large subunits of the cytochrome b6-f complex are cytochrome b6, subunit IV (17 kDa polypeptide, PetD), cytochrome f and the Rieske protein, while the 4 small subunits are PetG, PetL, PetM and PetN. The complex functions as a dimer.

The protein localises to the cellular thylakoid membrane. In terms of biological role, component of the cytochrome b6-f complex, which mediates electron transfer between photosystem II (PSII) and photosystem I (PSI), cyclic electron flow around PSI, and state transitions. The chain is Cytochrome b6-f complex subunit 4 from Parasynechococcus marenigrum (strain WH8102).